The following is a 360-amino-acid chain: MNAPLAGIWPWLPLLLTWLAPEVSSSWWYMRATGGSSRVMCDNVPGLVSRQRQLCHRHPDVMRAIGLGVAEWTAECQHQFRQHRWNCNTLDRDHSLFGRVLLRSSRESAFVYAISSAGVVFAITRACSQGELKSCSCDPKKKGTAKDSKGTFDWGGCSDNIDYGIRFARAFVDAKERKGKDARALMNLHNNRAGRKAVKRFLKQECKCHGVSGSCTLRTCWLAMADFRKTGDYLWRKYNGAIQVVMNQDGTGFTVANKRFKKPTKNDLVYFENSPDYCIRDRDAGSPGTAGRVCNLTSRGMDSCEVMCCGRGYDTSRITRMTKCECKFHWCCAVRCQDCLEALDVHTCKAPKSADWAAPT.

Positions 1–25 (MNAPLAGIWPWLPLLLTWLAPEVSS) are cleaved as a signal peptide. Cystine bridges form between Cys76–Cys87, Cys127–Cys135, Cys137–Cys157, Cys206–Cys220, Cys208–Cys215, Cys278–Cys309, Cys294–Cys304, Cys308–Cys348, Cys324–Cys339, Cys326–Cys336, and Cys331–Cys332. The O-palmitoleoyl serine; by PORCN moiety is linked to residue Ser212. N-linked (GlcNAc...) asparagine glycosylation occurs at Asn295.

This sequence belongs to the Wnt family. In terms of processing, palmitoleoylation is required for efficient binding to frizzled receptors. Depalmitoleoylation leads to Wnt signaling pathway inhibition.

Its subcellular location is the secreted. It is found in the extracellular space. The protein localises to the extracellular matrix. Ligand for members of the frizzled family of seven transmembrane receptors. Functions in the canonical Wnt signaling pathway that results in activation of transcription factors of the TCF/LEF family. Functions as a upstream regulator of FGF10 expression. Plays an important role in embryonic lung development. May contribute to embryonic brain development by regulating the proliferation of dopaminergic precursors and neurons. The sequence is that of Protein Wnt-2 (WNT2) from Loxodonta africana (African elephant).